The chain runs to 634 residues: Sodium-dependent multivitamin transporter (634 aa).

12 helical membrane passes run 23–43 (FSVV…VIGL), 65–85 (MGCL…VAIL), 100–120 (FLGC…IPVF), 142–162 (ICGT…ALYA), 175–195 (LWLS…LGGL), 207–227 (LVMF…VGGL), 255–275 (FWTL…VNQA), 295–315 (AVFP…LVMF), 350–370 (LPGL…SSAF), 403–423 (FAYG…GSVL), 427–447 (LSIF…GLFF), and 455–475 (AIVG…GSIV). Residues N488 and N497 are each glycosylated (N-linked (GlcNAc...) asparagine). A helical membrane pass occupies residues 526–546 (LWYSAHNSTTVIVVGLIVSLL).

It belongs to the sodium:solute symporter (SSF) (TC 2.A.21) family. Interacts with PDZD11. Expressed in the intestinal mucosa, liver and kidney (at protein level). Expressed in the colon.

Its subcellular location is the cell membrane. The protein resides in the apical cell membrane. The catalysed reaction is biotin(out) + 2 Na(+)(out) = biotin(in) + 2 Na(+)(in). It carries out the reaction (R)-pantothenate(out) + 2 Na(+)(out) = (R)-pantothenate(in) + 2 Na(+)(in). It catalyses the reaction (R)-lipoate(out) + 2 Na(+)(out) = (R)-lipoate(in) + 2 Na(+)(in). The enzyme catalyses iodide(out) + 2 Na(+)(out) = iodide(in) + 2 Na(+)(in). Functionally, sodium-dependent multivitamin transporter that mediates the electrogenic transport of pantothenate, biotin, lipoate and iodide. Functions as a Na(+)-coupled substrate symporter where the stoichiometry of Na(+):substrate is 2:1, creating an electrochemical Na(+) gradient used as driving force for substrate uptake. Required for biotin and pantothenate uptake in the intestine across the brush border membrane. Plays a role in the maintenance of intestinal mucosa integrity, by providing the gut mucosa with biotin. Contributes to the luminal uptake of biotin and pantothenate into the brain across the blood-brain barrier. This is Sodium-dependent multivitamin transporter from Mus musculus (Mouse).